The following is a 348-amino-acid chain: Glucan endo-1,3-beta-glucosidase, basic isoform (348 aa).

Q1 carries the pyrrolidone carboxylic acid modification. E95 serves as the catalytic Proton donor. E240 serves as the catalytic Nucleophile. A propeptide spans 317-348 (AQRMQRLLLMSSMQHIPLRVTCKLEPSSQSLL) (removed in mature form).

This sequence belongs to the glycosyl hydrolase 17 family.

Its subcellular location is the vacuole. It catalyses the reaction Hydrolysis of (1-&gt;3)-beta-D-glucosidic linkages in (1-&gt;3)-beta-D-glucans.. Functionally, implicated in the defense of plants against pathogens. The sequence is that of Glucan endo-1,3-beta-glucosidase, basic isoform from Phaseolus vulgaris (Kidney bean).